The following is a 205-amino-acid chain: Glycerol-3-phosphate acyltransferase (205 aa).

Transmembrane regions (helical) follow at residues 6–26 (STVL…AVVV), 55–75 (KAAI…VWLV), 89–109 (VALV…FRFV), 120–140 (ILLA…LVIA), and 162–182 (ALMF…VLLI).

This sequence belongs to the PlsY family. Probably interacts with PlsX.

It is found in the cell inner membrane. It carries out the reaction an acyl phosphate + sn-glycerol 3-phosphate = a 1-acyl-sn-glycero-3-phosphate + phosphate. Its pathway is lipid metabolism; phospholipid metabolism. Its function is as follows. Catalyzes the transfer of an acyl group from acyl-phosphate (acyl-PO(4)) to glycerol-3-phosphate (G3P) to form lysophosphatidic acid (LPA). This enzyme utilizes acyl-phosphate as fatty acyl donor, but not acyl-CoA or acyl-ACP. The polypeptide is Glycerol-3-phosphate acyltransferase (Herminiimonas arsenicoxydans).